A 121-amino-acid polypeptide reads, in one-letter code: Perlustrin-like protein (121 aa).

The signal sequence occupies residues 1 to 23; the sequence is MKFGVGFLLSCLVALNTVQNMLA. Residues 24–104 enclose the IGFBP N-terminal domain; sequence LSCLPCDFDT…FDFKGTCQES (81 aa). Disulfide bonds link Cys26-Cys52, Cys29-Cys54, Cys36-Cys55, Cys45-Cys58, Cys66-Cys79, and Cys73-Cys101. 3 N-linked (GlcNAc...) asparagine glycosylation sites follow: Asn68, Asn81, and Asn117.

In terms of tissue distribution, component of the acid-insoluble organic matrix of calcified layers of the shell (at protein level).

The protein localises to the secreted. The sequence is that of Perlustrin-like protein from Lottia gigantea (Giant owl limpet).